A 111-amino-acid chain; its full sequence is Large ribosomal subunit protein uL24 (111 aa).

This sequence belongs to the universal ribosomal protein uL24 family. As to quaternary structure, part of the 50S ribosomal subunit.

One of two assembly initiator proteins, it binds directly to the 5'-end of the 23S rRNA, where it nucleates assembly of the 50S subunit. Its function is as follows. One of the proteins that surrounds the polypeptide exit tunnel on the outside of the subunit. In Myxococcus xanthus (strain DK1622), this protein is Large ribosomal subunit protein uL24.